The sequence spans 901 residues: MSGQTLTDRIAAAQYSVTGSAVARAVCKATTHEVMGPKKKHLDYLIQATNETNVNIPQMADTLFERATNSSWVVVFKALVTTHHLMVHGNERFIQYLASRNTLFNLSNFLDKSGSHGYDMSTFIRRYSRYLNEKAFSYRQMAFDFARVKKGADGVMRTMVPEKLLKSMPILQGQIDALLEFDVHPNELTNGVINAAFMLLFKDLIKLFACYNDGVINLLEKFFEMKKGQCKDALEIYKRFLTRMTRVSEFLKVAEQVGIDKGDIPDLTQAPSSLMETLEQHLNTLEGKKPGNNEGSGAPSPLSKSSPATTVTSPNSTPAKTIDTSPPVDIFATASAAAPVSSAKPSSDLLDLQPDFSGAAAGAAAPVVPPSGGATAWGDLLGEDSLAALSSVPCEAPISDPFAPEPSPPTTTTEPASASASTTTAVTAVTTEVDLFGDAFAASPGEAPAASEGATAPATPAPVAAALDACSGNDPFAPSEGSAEAAPELDLFAMKPPETSAPVVTPTASTAPPVPATAPSPAPTAVAATAATTTAAAAATTTATTSAAAATTAAAPPALDIFGDLFDSAPEVAAAPKPDAAPSIDLFGTDAFSSPPRGASPVPESSLTADLLSVDAFAAPSPASTASPAKAESSGVIDLFGDAFGSGASETQPAPQAVSSSSASADLLAGFGGSFMAPSTTPVTPAQNNLLQPSFEAAFGTTPSTSSSSSFDPSVFDGLGDLLMPTMAPSGQPAPVSMVPPSPAMAASKGLGSDLDSSLASLVGNLGISGTTSKKGDLQWNAGEKKLTGGANWQPKVTPATWSAGVPPQGTVPPTSSVPPGAGAPSVGQPGAGFGMPPSGTGMTMMSQQPVMFAQPMMRPPFGAAAVPGTQLSPSPTPATQSPKKPPAKDPLADLNIKDFL.

Positions 14 to 145 (QYSVTGSAVA…FSYRQMAFDF (132 aa)) constitute an ENTH domain. Disordered regions lie at residues 285–326 (LEGK…DTSP), 397–424 (PISD…STTT), 497–522 (PETS…PSPA), and 573–606 (AAAP…PESS). Phosphoserine is present on residues Ser-296, Ser-300, and Ser-306. Residues 302–324 (LSKSSPATTVTSPNSTPAKTIDT) show a composition bias toward polar residues. A glycan (O-linked (GlcNAc) threonine) is linked at Thr-310. A Phosphoserine modification is found at Ser-313. Position 317 is a phosphothreonine (Thr-317). Low complexity-rich tracts occupy residues 410–424 (TTTT…STTT) and 500–511 (SAPVVTPTASTA). The segment covering 512–522 (PPVPATAPSPA) has biased composition (pro residues). A phosphoserine mark is found at Ser-594, Ser-600, Ser-621, Ser-627, and Ser-761. Disordered stretches follow at residues 803–845 (SAGV…GMTM) and 857–901 (MMRP…KDFL). A compositionally biased stretch (low complexity) spans 835-845 (GMPPSGTGMTM). An Asymmetric dimethylarginine; alternate modification is found at Arg-859. The residue at position 859 (Arg-859) is an Omega-N-methylarginine; alternate. Over residues 870 to 882 (TQLSPSPTPATQS) the composition is skewed to polar residues. The segment covering 887–901 (PAKDPLADLNIKDFL) has biased composition (basic and acidic residues).

Belongs to the PICALM/SNAP91 family. Binds AP2A2. Interacts with AP2B1; clathrin competes with SNAP91. Thr-310 can be modified by the addition of N-acetylglucosamine which can be further phosphorylated. There is no evidence for direct Thr-310 phosphorylation. As to expression, brain. Associated with the synapses.

The protein resides in the cell membrane. The protein localises to the membrane. It is found in the coated pit. Its function is as follows. Adaptins are components of the adaptor complexes which link clathrin to receptors in coated vesicles. Clathrin-associated protein complexes are believed to interact with the cytoplasmic tails of membrane proteins, leading to their selection and concentration. Binding of AP180 to clathrin triskelia induces their assembly into 60-70 nm coats. The chain is Clathrin coat assembly protein AP180 (Snap91) from Mus musculus (Mouse).